The chain runs to 81 residues: Acyl carrier protein (81 aa).

Residues 3–78 (QEIFDKIKNI…EAVNIIAEKT (76 aa)) enclose the Carrier domain. S38 carries the O-(pantetheine 4'-phosphoryl)serine modification.

This sequence belongs to the acyl carrier protein (ACP) family. In terms of processing, 4'-phosphopantetheine is transferred from CoA to a specific serine of apo-ACP by AcpS. This modification is essential for activity because fatty acids are bound in thioester linkage to the sulfhydryl of the prosthetic group.

The protein resides in the cytoplasm. It functions in the pathway lipid metabolism; fatty acid biosynthesis. In terms of biological role, carrier of the growing fatty acid chain in fatty acid biosynthesis. This chain is Acyl carrier protein, found in Picosynechococcus sp. (strain ATCC 27264 / PCC 7002 / PR-6) (Agmenellum quadruplicatum).